Consider the following 426-residue polypeptide: Glutamate-1-semialdehyde 2,1-aminomutase (426 aa).

Lysine 265 bears the N6-(pyridoxal phosphate)lysine mark.

It belongs to the class-III pyridoxal-phosphate-dependent aminotransferase family. HemL subfamily. In terms of assembly, homodimer. It depends on pyridoxal 5'-phosphate as a cofactor.

It is found in the cytoplasm. It carries out the reaction (S)-4-amino-5-oxopentanoate = 5-aminolevulinate. It participates in porphyrin-containing compound metabolism; protoporphyrin-IX biosynthesis; 5-aminolevulinate from L-glutamyl-tRNA(Glu): step 2/2. The polypeptide is Glutamate-1-semialdehyde 2,1-aminomutase (Yersinia pestis bv. Antiqua (strain Antiqua)).